A 185-amino-acid polypeptide reads, in one-letter code: Photosystem I assembly protein Ycf4 (185 aa).

The next 2 helical transmembrane spans lie at 24–44 (YIIGGMLTIGGIGFLLASISS) and 58–78 (ALLFIPQGIIMGAYGVIANLL).

This sequence belongs to the Ycf4 family.

Its subcellular location is the cellular thylakoid membrane. Functionally, seems to be required for the assembly of the photosystem I complex. The polypeptide is Photosystem I assembly protein Ycf4 (Prochlorococcus marinus (strain MIT 9215)).